The primary structure comprises 291 residues: N-acetylmannosamine kinase (291 aa).

ATP contacts are provided by residues 5–12 (AIDIGGTK) and 132–139 (GVGGGVVS). Histidine 156, cysteine 166, cysteine 168, and cysteine 173 together coordinate Zn(2+).

The protein belongs to the ROK (NagC/XylR) family. NanK subfamily. As to quaternary structure, homodimer.

The catalysed reaction is an N-acyl-D-mannosamine + ATP = an N-acyl-D-mannosamine 6-phosphate + ADP + H(+). It functions in the pathway amino-sugar metabolism; N-acetylneuraminate degradation; D-fructose 6-phosphate from N-acetylneuraminate: step 2/5. Catalyzes the phosphorylation of N-acetylmannosamine (ManNAc) to ManNAc-6-P. The sequence is that of N-acetylmannosamine kinase from Escherichia coli O139:H28 (strain E24377A / ETEC).